The following is a 92-amino-acid chain: Acylphosphatase (92 aa).

An Acylphosphatase-like domain is found at 5-90; it reads TWRLVAHGRV…GEFAGFEFRP (86 aa). Catalysis depends on residues arginine 20 and asparagine 38.

The protein belongs to the acylphosphatase family.

The enzyme catalyses an acyl phosphate + H2O = a carboxylate + phosphate + H(+). This chain is Acylphosphatase (acyP), found in Cupriavidus necator (strain ATCC 17699 / DSM 428 / KCTC 22496 / NCIMB 10442 / H16 / Stanier 337) (Ralstonia eutropha).